We begin with the raw amino-acid sequence, 122 residues long: Glucagon-2 (122 aa).

A signal peptide spans 1–21 (MTSLHSLAGLLLLMIIQSSWQ). Propeptides lie at residues 83 to 86 (NGLF) and Glu-122.

Belongs to the glucagon family.

The protein resides in the secreted. Functionally, promotes hydrolysis of glycogen and lipids, and raises the blood sugar level. The protein is Glucagon-2 (gcg2) of Lophius americanus (American angler).